Consider the following 161-residue polypeptide: MQFMGTASRMASTQRAKPMEMPRISRDTARMLVNYLTYQAVCVIRDQLAETNPAGAYRLQVFSAEFSFQDGEAYLAALLNHDRELGLRVMTVREHLAEHILDYLPEMTIAQIQEANINHRRALLERLTGLGAEPSLPETEVSDRPSDSATPDDASNASHAD.

Disordered stretches follow at residues 1–20 and 130–161; these read MQFMGTASRMASTQRAKPME and LGAEPSLPETEVSDRPSDSATPDDASNASHAD. Residues 147-161 are compositionally biased toward polar residues; sequence DSATPDDASNASHAD.

It belongs to the RbcX family. Homodimer. Interacts with the exposed C-terminal peptide of endogenous RbcL ('Lys-460-Asp-470') via its central cleft, as well as C-terminal peptides from other cyanobacterial RbcL. Contacts a second RbcL monomer via its peripheral polar surface.

Its subcellular location is the carboxysome. It is found in the cytoplasm. In terms of biological role, an RbcL-specific chaperone. The central cleft of the RbcX homodimer (RbcX2) binds the C-terminus of an RbcL monomer, stabilizing the C-terminus and probably preventing its reassociation with chaperonin GroEL-ES. At the same time the peripheral region of RbcX2 binds a second RbcL monomer, bridging the RbcL homodimers in the correct orientation. The RbcX2(2)-bound RbcL dimers then assemble into the RbcL8 core (RbcL8-(RbcX2)8). RbcS binding triggers the release of RbcX2. The protein is RuBisCO chaperone RbcX of Synechococcus sp. (strain ATCC 27144 / PCC 6301 / SAUG 1402/1) (Anacystis nidulans).